The chain runs to 127 residues: Large ribosomal subunit protein bL19 (127 aa).

The protein belongs to the bacterial ribosomal protein bL19 family.

Its function is as follows. This protein is located at the 30S-50S ribosomal subunit interface and may play a role in the structure and function of the aminoacyl-tRNA binding site. This is Large ribosomal subunit protein bL19 from Myxococcus xanthus (strain DK1622).